A 191-amino-acid chain; its full sequence is UPF0302 protein USA300HOU_1400 (191 aa).

The protein belongs to the UPF0302 family.

This Staphylococcus aureus (strain USA300 / TCH1516) protein is UPF0302 protein USA300HOU_1400.